We begin with the raw amino-acid sequence, 104 residues long: Complex III assembly factor LYRM7 (104 aa).

Ser60 is modified (phosphoserine).

The protein belongs to the complex I LYR family. As to quaternary structure, interacts with UQCRFS1.

It localises to the mitochondrion matrix. Its function is as follows. Assembly factor required for Rieske Fe-S protein UQCRFS1 incorporation into the cytochrome b-c1 (CIII) complex. Functions as a chaperone, binding to this subunit within the mitochondrial matrix and stabilizing it prior to its translocation and insertion into the late CIII dimeric intermediate within the mitochondrial inner membrane. The protein is Complex III assembly factor LYRM7 (Lyrm7) of Mus musculus (Mouse).